Here is a 175-residue protein sequence, read N- to C-terminus: Large ribosomal subunit protein uL10 (175 aa).

It belongs to the universal ribosomal protein uL10 family. In terms of assembly, part of the ribosomal stalk of the 50S ribosomal subunit. The N-terminus interacts with L11 and the large rRNA to form the base of the stalk. The C-terminus forms an elongated spine to which L12 dimers bind in a sequential fashion forming a multimeric L10(L12)X complex.

Its function is as follows. Forms part of the ribosomal stalk, playing a central role in the interaction of the ribosome with GTP-bound translation factors. In Prochlorococcus marinus (strain MIT 9313), this protein is Large ribosomal subunit protein uL10.